Reading from the N-terminus, the 96-residue chain is Small ribosomal subunit protein bS6 (96 aa).

It belongs to the bacterial ribosomal protein bS6 family.

Binds together with bS18 to 16S ribosomal RNA. In Streptococcus mutans serotype c (strain ATCC 700610 / UA159), this protein is Small ribosomal subunit protein bS6.